The chain runs to 623 residues: DNA-directed RNA polymerase III subunit rpc3 (623 aa).

3 disordered regions span residues 131 to 164, 249 to 282, and 381 to 412; these read RSDASKTNGVNEGEHDRPEGENETNGTNGEHVSD, RGVKRSQTNGVSDDNETEKARFDYDDGEDEDEEN, and SLGPTNTPANNRLGKRTFDDTVDDNDDDHGAT. The segment covering 273–282 has biased composition (acidic residues); the sequence is DDGEDEDEEN. The tract at residues 550-571 is leucine-zipper; the sequence is TYKAMSRCLQRLKFERGRLKDF.

This sequence belongs to the RNA polymerase beta chain family. As to quaternary structure, component of the RNA polymerase III (Pol III) complex consisting of 17 subunits.

The protein resides in the nucleus. Its function is as follows. DNA-dependent RNA polymerase catalyzes the transcription of DNA into RNA using the four ribonucleoside triphosphates as substrates. Specific core component of RNA polymerase III which synthesizes small RNAs, such as 5S rRNA and tRNAs. This Emericella nidulans (strain FGSC A4 / ATCC 38163 / CBS 112.46 / NRRL 194 / M139) (Aspergillus nidulans) protein is DNA-directed RNA polymerase III subunit rpc3 (rpc82).